The sequence spans 346 residues: MESLPTTVPSKSERRARSSKFSQSSSKPSVIMAFFSCVAWLYVAGRLWQDAENRVVLNNILKKSYDQKPKVLTVDDKLMVLGCKDLERRIVETEMELTLAKSQGYLKNLKSGSSSGKKLLAVIGVYSGFGSHLRRNTFRGSYMPQGDALRKLEERGIVIRFVIGRSPNRGDSLDRKIDEENQARKDFLILENHEEAQEELAKKVKFFFSAAVQNWDAEFYIKVDDNIDLDLEGLIGLLESRRGQDAAYIGCMKSGEVVAEEGGKWYEPEWWKFGDEKSYFRHAAGSLLILSKTLAQYVNINSGSLKTYAFDDTSIGSWMIGVQATYIDDNRLCCSSIRQDKVCSVA.

Polar residues predominate over residues Met-1 to Ser-10. Residues Met-1–Phe-21 form a disordered region. The Cytoplasmic segment spans residues Met-1–Pro-28. Residues Ser-29–Gly-45 form a helical; Signal-anchor for type II membrane protein membrane-spanning segment. Residues Arg-46 to Ala-346 lie on the Lumenal side of the membrane.

Belongs to the glycosyltransferase 31 family. Mn(2+) serves as cofactor. Expressed in roots, rosette leaves, cauline leaves, stems, flowers and siliques.

The protein localises to the golgi apparatus membrane. It functions in the pathway protein modification; protein glycosylation. Functionally, possesses hydroxyproline O-galactosyltransferase activity. Transfers galactose from UDP-galactose to hydroxyproline residues in the arabinogalactan proteins (AGPs). Is specific for AGPs containing non-contiguous peptidyl hydroxyproline residues. The addition of galactose onto the peptidyl hydroxyproline residues in AGP core proteins represents the first committed step in arabinogalactan polysaccharide addition. AGP glycans play essential roles in both vegetative and reproductive plant growth. The protein is Hydroxyproline O-galactosyltransferase HPGT3 of Arabidopsis thaliana (Mouse-ear cress).